The sequence spans 153 residues: Holo-[acyl-carrier-protein] synthase (153 aa).

Residues D24 and E78 each coordinate Mg(2+).

Belongs to the P-Pant transferase superfamily. AcpS family. Mg(2+) serves as cofactor.

Its subcellular location is the cytoplasm. It catalyses the reaction apo-[ACP] + CoA = holo-[ACP] + adenosine 3',5'-bisphosphate + H(+). Its function is as follows. Transfers the 4'-phosphopantetheine moiety from coenzyme A to a Ser of acyl-carrier-protein. The polypeptide is Holo-[acyl-carrier-protein] synthase (Bordetella pertussis (strain Tohama I / ATCC BAA-589 / NCTC 13251)).